Reading from the N-terminus, the 145-residue chain is Ribosome-binding factor A (145 aa).

The span at 122–132 shows a compositional bias: basic and acidic residues; sequence KVQRDLESAPR. The tract at residues 122-145 is disordered; sequence KVQRDLESAPREDDEGEPASSSRD.

Belongs to the RbfA family. Monomer. Binds 30S ribosomal subunits, but not 50S ribosomal subunits or 70S ribosomes.

The protein localises to the cytoplasm. In terms of biological role, one of several proteins that assist in the late maturation steps of the functional core of the 30S ribosomal subunit. Associates with free 30S ribosomal subunits (but not with 30S subunits that are part of 70S ribosomes or polysomes). Required for efficient processing of 16S rRNA. May interact with the 5'-terminal helix region of 16S rRNA. The protein is Ribosome-binding factor A of Methylorubrum extorquens (strain CM4 / NCIMB 13688) (Methylobacterium extorquens).